A 154-amino-acid chain; its full sequence is Host transcription reprogramming factor 5 (154 aa).

The N-terminal stretch at 1 to 19 (MQILRIAQLMALLATCASA) is a signal peptide. Residues 24–85 (TGSRVYSRDV…KRIKAEQNAR (62 aa)) form a disordered region. Positions 35 to 50 (QTQGGFSGSPTTNSPD) are enriched in polar residues. Over residues 69-85 (ETEKERKKRIKAEQNAR) the composition is skewed to basic and acidic residues. The C2H2-type; degenerate zinc finger occupies 96 to 121 (YQCPYCSDPTVFSHSDALGRHIYTIH).

It is found in the secreted. Its subcellular location is the host nucleus. Its function is as follows. Probable secreted effector that translocates into the nuclei of host cells to reprogram the expression of targeted genes by binding on effector binding elements in rice. This Pyricularia oryzae (strain 70-15 / ATCC MYA-4617 / FGSC 8958) (Rice blast fungus) protein is Host transcription reprogramming factor 5.